The chain runs to 363 residues: Phosphoserine aminotransferase (363 aa).

L-glutamate is bound at residue R42. Residues 76-77, W102, T156, D175, and Q198 each bind pyridoxal 5'-phosphate; that span reads GR. K199 carries the N6-(pyridoxal phosphate)lysine modification. A pyridoxal 5'-phosphate-binding site is contributed by 240–241; it reads NT.

The protein belongs to the class-V pyridoxal-phosphate-dependent aminotransferase family. SerC subfamily. In terms of assembly, homodimer. Pyridoxal 5'-phosphate is required as a cofactor.

It localises to the cytoplasm. It catalyses the reaction O-phospho-L-serine + 2-oxoglutarate = 3-phosphooxypyruvate + L-glutamate. The catalysed reaction is 4-(phosphooxy)-L-threonine + 2-oxoglutarate = (R)-3-hydroxy-2-oxo-4-phosphooxybutanoate + L-glutamate. Its pathway is amino-acid biosynthesis; L-serine biosynthesis; L-serine from 3-phospho-D-glycerate: step 2/3. It participates in cofactor biosynthesis; pyridoxine 5'-phosphate biosynthesis; pyridoxine 5'-phosphate from D-erythrose 4-phosphate: step 3/5. Catalyzes the reversible conversion of 3-phosphohydroxypyruvate to phosphoserine and of 3-hydroxy-2-oxo-4-phosphonooxybutanoate to phosphohydroxythreonine. In Shewanella frigidimarina (strain NCIMB 400), this protein is Phosphoserine aminotransferase.